Consider the following 187-residue polypeptide: DNA-directed RNA polymerase subunit Rpo7 (187 aa).

An S1 motif domain is found at 82 to 166 (YELIEGEVVD…RGSKIALTMR (85 aa)).

It belongs to the eukaryotic RPB7/RPC8 RNA polymerase subunit family. Part of the RNA polymerase complex. Forms a stalk with Rpo4 that extends from the main structure.

It localises to the cytoplasm. The catalysed reaction is RNA(n) + a ribonucleoside 5'-triphosphate = RNA(n+1) + diphosphate. In terms of biological role, DNA-dependent RNA polymerase (RNAP) catalyzes the transcription of DNA into RNA using the four ribonucleoside triphosphates as substrates. This Methanocaldococcus jannaschii (strain ATCC 43067 / DSM 2661 / JAL-1 / JCM 10045 / NBRC 100440) (Methanococcus jannaschii) protein is DNA-directed RNA polymerase subunit Rpo7.